Reading from the N-terminus, the 182-residue chain is Large ribosomal subunit protein bL25 (182 aa).

The protein belongs to the bacterial ribosomal protein bL25 family. CTC subfamily. As to quaternary structure, part of the 50S ribosomal subunit; part of the 5S rRNA/L5/L18/L25 subcomplex. Contacts the 5S rRNA. Binds to the 5S rRNA independently of L5 and L18.

Its function is as follows. This is one of the proteins that binds to the 5S RNA in the ribosome where it forms part of the central protuberance. The chain is Large ribosomal subunit protein bL25 from Borreliella burgdorferi (strain ZS7) (Borrelia burgdorferi).